Reading from the N-terminus, the 295-residue chain is MSSINERPQDPSSALEQATQDVANLKSEFHHIMDEMQVADKTLVSSREQYLREDYVLHKLVKQHGSLTKDPKEGSITETVEKEMKRCGDLQQQKCILANTALYLVTKHLSKIKANIESLEEDGLLAPLDDELSDKKAGSVDLGAGIAGLGNGTAGSGSSSGRKRPASSSSANGKGQKRKQQKKERSRSHQRAGTVSRDVSPNAGIGRDPTFDALAYNDDLFKMNQGGEEDDKQLYCFCQRVSYGEMVACDGPNCKYEWFHYSCVNLTEPPKGQWYCPECRLEIANQKLNKKKKKQ.

Residues 151–208 (NGTAGSGSSSGRKRPASSSSANGKGQKRKQQKKERSRSHQRAGTVSRDVSPNAGIGRD) form a disordered region. Positions 156 to 171 (SGSSSGRKRPASSSSA) are enriched in low complexity. Residues 175-190 (GQKRKQQKKERSRSHQ) are compositionally biased toward basic residues. The PHD-type zinc finger occupies 233–282 (QLYCFCQRVSYGEMVACDGPNCKYEWFHYSCVNLTEPPKGQWYCPECRLE). Zn(2+) is bound by residues Cys-236, Cys-238, Cys-249, Cys-254, His-260, Cys-263, Cys-276, and Cys-279.

The protein belongs to the ING family. As to quaternary structure, interacts with H3K4me3 and to a lesser extent with H3K4me2. Component of the NuA4 histone acetyltransferase complex.

The protein localises to the nucleus. Its function is as follows. Component of the NuA4 histone acetyltransferase complex which is involved in transcriptional activation of selected genes principally by acetylation of nucleosomal histone H4 and H2A. The NuA4 complex is also involved in DNA repair. Involved in cell cycle progression and meiosis. This is Chromatin modification-related protein YNG2 (YNG2) from Kluyveromyces lactis (strain ATCC 8585 / CBS 2359 / DSM 70799 / NBRC 1267 / NRRL Y-1140 / WM37) (Yeast).